Reading from the N-terminus, the 37-residue chain is Large ribosomal subunit protein bL36 (37 aa).

Belongs to the bacterial ribosomal protein bL36 family.

The polypeptide is Large ribosomal subunit protein bL36 (Leptospira interrogans serogroup Icterohaemorrhagiae serovar copenhageni (strain Fiocruz L1-130)).